The sequence spans 393 residues: Upstream-binding factor 1-like protein 1 (393 aa).

2 consecutive DNA-binding regions (HMG box) follow at residues 100–168 and 222–288; these read PKRP…ARFR and QKPP…DLWL. Residues 308-393 are disordered; sequence KNMAMTGGPD…SSGEEIEVDV (86 aa). Over residues 365–377 the composition is skewed to basic and acidic residues; the sequence is EENRKKDREKEES.

The protein resides in the cytoplasm. The protein localises to the nucleus. Its function is as follows. Essential for proliferation of the inner cell mass and trophectodermal cells in peri-implantation development. The sequence is that of Upstream-binding factor 1-like protein 1 from Homo sapiens (Human).